A 286-amino-acid chain; its full sequence is MEIFKTCFLMVVLMLLFVFVGGYVGGQQGMIIAFLVALGMNFFSYFFSDKLVLKRYNAVEVSKKNAKGLYAIVRRLSQNAGLPMPKVYIIPERAPNAFATGRNPSHAAVAVTEGLLNLLNENEIEGVLAHELSHVRHYDILTGSIAAVMAGAIAMLANFAKFGAASGSNRNTQKGNAAIMLIIALIMPLAATIIQMAISREREYKADKGAALLTGHPEWLESALNKLENYSNSYTMQNASPQSAHMFIINPFGDIKNTLSTLFRTHPSTSDRIAELKKIGMQLKNR.

The next 2 membrane-spanning stretches (helical) occupy residues 6–26 (TCFLMVVLMLLFVFVGGYVGG) and 28–48 (QGMIIAFLVALGMNFFSYFFS). H130 is a Zn(2+) binding site. The active site involves E131. A Zn(2+)-binding site is contributed by H134. A run of 2 helical transmembrane segments spans residues 140 to 160 (ILTGSIAAVMAGAIAMLANFA) and 178 to 198 (AIMLIIALIMPLAATIIQMAI). Position 203 (E203) interacts with Zn(2+).

Belongs to the peptidase M48B family. Zn(2+) is required as a cofactor.

It is found in the cell inner membrane. The chain is Protease HtpX homolog from Campylobacter curvus (strain 525.92).